Here is a 380-residue protein sequence, read N- to C-terminus: MNREKSPIPGDGGDGLPPQATRRAGPPAAAAAAEYDISRMPDFPTRNPGHRRAHSEILSLPEDLDLCAAGGGDGPSLSDENDEELFSMFLDVEKLNSTCGASSEAEAESSSAGAAAAVAAAAAAAAHGARPKHQHSLSMDESMSIKAEELVGASPGTEGMSSAEAKKAVSAAKLAELALVDPKRAKRIWANRQSAARSKERKMRYIAELERKVQTLQTEATTLSAQLALLQRDTSGLTTENSELKLRLQTMEQQVHLQDALNDTLKSEVQRLKVATGQMANGGGMMMNFGGMPHQFGGNQQMFQNNQAMQSMLAAHQLQQLQLHPQAQQQQVLHPQHQQQQPLHPLQAQQLQQAARDLKMKSPMGGQSQWGDGKSGSSGN.

A disordered region spans residues M1–I57. The segment covering L16 to A33 has biased composition (low complexity). The interval E56 to E108 is activation of RTBV promoter. Residues D181–L244 form the bZIP domain. Residues K183 to R204 are basic motif. Residues L209–L244 form a leucine-zipper region. The tract at residues G283–D357 is interaction with TBP2. The segment covering Q326–A355 has biased composition (low complexity). The segment at Q326–N380 is disordered.

It belongs to the bZIP family. As to quaternary structure, binds DNA as a homodimer or as a heterodimer with RF2b. The heterodimer binds stronger to DNA than the homodimer. Interacts with TBP2. As to expression, expressed at high levels in levels in leaf sheath, moderate levels in leaf blade, but not in roots. Predominantly expressed in vascular tissues.

Its subcellular location is the nucleus. Its function is as follows. Transcription factor probably involved in vascular development and shoot tissue organization. Binds to the DNA sequence 5'-CCGAGTGTGCCCCTGG-3' present in the promoter region Box II of the phloem-specific rice tungro bacilliform virus (RTBV) promoter. May regulate tissue-specific expression of the RTBV promoter and virus replication. This chain is Transcription factor RF2a (RF2a), found in Oryza sativa subsp. japonica (Rice).